Consider the following 560-residue polypeptide: Protein yellow (560 aa).

Positions 1-30 are cleaved as a signal peptide; sequence MHVQDKGGIGALTALSLLLVAVTMVTPTQA. Asn-153 and Asn-224 each carry an N-linked (GlcNAc...) asparagine glycan. Positions 452 to 492 are disordered; the sequence is QYRPVLPQKPQTSWGPSPPSRSYLPSLGASPGGPGQVVSSV. Residues 471 to 480 are compositionally biased toward low complexity; the sequence is SRSYLPSLGA.

It belongs to the major royal jelly protein family.

The protein resides in the secreted. In terms of biological role, controls the pigmentation pattern of the adult cuticle and larval mouth parts. The protein is Protein yellow (y) of Drosophila pseudoobscura pseudoobscura (Fruit fly).